The sequence spans 205 residues: High frequency lysogenization protein HflD homolog (205 aa).

Belongs to the HflD family.

The protein resides in the cytoplasm. Its subcellular location is the cell inner membrane. This chain is High frequency lysogenization protein HflD homolog, found in Haemophilus influenzae (strain PittEE).